A 304-amino-acid polypeptide reads, in one-letter code: Killer cell immunoglobulin-like receptor 2DS5 (304 aa).

Residues 1–21 form the signal peptide; it reads MSLMVISMACVAFFLLQGAWP. Residues 22–245 are Extracellular-facing; sequence HEGFRRKPSL…SETGNPRHLH (224 aa). 2 consecutive Ig-like C2-type domains span residues 42–107 and 142–205; these read EETV…VTHS and GESV…FRDS. 2 disulfide bridges follow: Cys-49-Cys-100 and Cys-149-Cys-198. N-linked (GlcNAc...) asparagine glycans are attached at residues Asn-67, Asn-84, Asn-178, and Asn-223. Residues 246–264 traverse the membrane as a helical segment; the sequence is VLIGTSVVKLPFTILLFFL. The Cytoplasmic segment spans residues 265 to 304; the sequence is LHRWCSNKKNASVMDQGPAGNRTVNREDSDEQDHQEVSYA. Residues 275–304 are disordered; it reads ASVMDQGPAGNRTVNREDSDEQDHQEVSYA. The segment covering 288–304 has biased composition (basic and acidic residues); it reads VNREDSDEQDHQEVSYA.

Belongs to the immunoglobulin superfamily. As to quaternary structure, interacts with TYROBP. Post-translationally, N-glycosylated, glycosylation varies depending on the allele which alters cell surface expression levels. As to expression, expressed on a discrete subset of peripheral blood NK cells.

Its subcellular location is the cell membrane. In terms of biological role, activating natural killer (NK) receptor that recognizes C2 epitopes of HLA-C alleles. Bridging the innate and adaptive immune systems, NK cells express a number of cell surface receptors which either inhibit or stimulate their cytotoxicity. Able to activate NK cells citotoxicity and cytokine production such as IFNG. Receptor functions are attenuated even lost in some alleles, such as KIR2DS5*002 represented in this entry. The protein is Killer cell immunoglobulin-like receptor 2DS5 of Homo sapiens (Human).